We begin with the raw amino-acid sequence, 525 residues long: Calcium uptake protein 1 homolog, mitochondrial (525 aa).

Residues 109–146 are disordered; sequence ADAGQRPSSAADVNGEDKSSESESEDSEDEEAGSDLHL. The segment covering 130 to 141 has biased composition (acidic residues); sequence SESEDSEDEEAG. EF-hand domains are found at residues 268–303 and 459–494; these read ISRR…VRQQ and LSDH…RVQR. Ca(2+) contacts are provided by D281, N283, D285, D287, E292, D472, N474, D476, Q478, and E483.

This sequence belongs to the MICU1 family. MICU1 subfamily.

The protein localises to the mitochondrion intermembrane space. It is found in the mitochondrion inner membrane. Calcium sensor of the mitochondrial calcium uniporter (MCU) channel, which senses calcium level via its EF-hand domains. At low calcium levels, MICU1 occludes the pore of the MCU channel, preventing mitochondrial calcium uptake. At higher calcium levels, calcium-binding to MICU1 induces a conformational change that weakens MCU-MICU1 interactions and moves MICU1 away from the pore, allowing calcium permeation through the MCU channel. Also required to protect against manganese toxicity by preventing manganese uptake by MCU. During development, required in alpha/beta or gamma mushroom body neurons to support olfactory intermediate-term memory in the adult. The sequence is that of Calcium uptake protein 1 homolog, mitochondrial from Drosophila melanogaster (Fruit fly).